Consider the following 172-residue polypeptide: C-phycocyanin beta subunit (172 aa).

Asparagine 72 bears the N4-methylasparagine mark. Positions 82 and 153 each coordinate (2R,3E)-phycocyanobilin.

This sequence belongs to the phycobiliprotein family. As to quaternary structure, heterodimer of an alpha and a beta chain, which further assembles into trimers. The trimers assemble into hexamers, although these were not seen in the crystallographic studies. Part of 2 PBS rod complexes, the conventional CpcG-PBS rod and a photosystem I-specific CpcL-PBS rod, both of which include ferredoxin--NADP reductase (petH). Interacts with rod linker CpcC2 via the latter's N-terminal PBS-linker domain. Contains two covalently linked bilin chromophores.

It localises to the cellular thylakoid membrane. In terms of biological role, light-harvesting photosynthetic bile pigment-protein from the phycobiliprotein complex (phycobilisome, PBS). Phycocyanin is the major phycobiliprotein in the PBS rod. The protein is C-phycocyanin beta subunit (cpcB) of Synechocystis sp. (strain ATCC 27184 / PCC 6803 / Kazusa).